Reading from the N-terminus, the 280-residue chain is 4-diphosphocytidyl-2-C-methyl-D-erythritol kinase (280 aa).

K11 is a catalytic residue. 95 to 105 (PVGAGLGGGSS) provides a ligand contact to ATP. D137 is a catalytic residue.

It belongs to the GHMP kinase family. IspE subfamily.

It carries out the reaction 4-CDP-2-C-methyl-D-erythritol + ATP = 4-CDP-2-C-methyl-D-erythritol 2-phosphate + ADP + H(+). It functions in the pathway isoprenoid biosynthesis; isopentenyl diphosphate biosynthesis via DXP pathway; isopentenyl diphosphate from 1-deoxy-D-xylulose 5-phosphate: step 3/6. Its function is as follows. Catalyzes the phosphorylation of the position 2 hydroxy group of 4-diphosphocytidyl-2C-methyl-D-erythritol. The chain is 4-diphosphocytidyl-2-C-methyl-D-erythritol kinase from Geobacter sp. (strain M21).